The sequence spans 351 residues: Biotin synthase (351 aa).

In terms of domain architecture, Radical SAM core spans Pro73 to Arg298. [4Fe-4S] cluster-binding residues include Cys88, Cys92, and Cys95. Residues Cys131, Cys164, Cys223, and Arg293 each coordinate [2Fe-2S] cluster.

Belongs to the radical SAM superfamily. Biotin synthase family. As to quaternary structure, homodimer. [4Fe-4S] cluster is required as a cofactor. It depends on [2Fe-2S] cluster as a cofactor.

It carries out the reaction (4R,5S)-dethiobiotin + (sulfur carrier)-SH + 2 reduced [2Fe-2S]-[ferredoxin] + 2 S-adenosyl-L-methionine = (sulfur carrier)-H + biotin + 2 5'-deoxyadenosine + 2 L-methionine + 2 oxidized [2Fe-2S]-[ferredoxin]. It functions in the pathway cofactor biosynthesis; biotin biosynthesis; biotin from 7,8-diaminononanoate: step 2/2. Functionally, catalyzes the conversion of dethiobiotin (DTB) to biotin by the insertion of a sulfur atom into dethiobiotin via a radical-based mechanism. In Frankia alni (strain DSM 45986 / CECT 9034 / ACN14a), this protein is Biotin synthase.